A 101-amino-acid polypeptide reads, in one-letter code: Small ribosomal subunit protein uS14 (101 aa).

Positions 1–10 (MAKKSSIEKN) are enriched in basic and acidic residues. Positions 1-24 (MAKKSSIEKNNRRKRLTKNAAPKR) are disordered. Positions 11–24 (NRRKRLTKNAAPKR) are enriched in basic residues.

This sequence belongs to the universal ribosomal protein uS14 family. As to quaternary structure, part of the 30S ribosomal subunit. Contacts proteins S3 and S10.

Its function is as follows. Binds 16S rRNA, required for the assembly of 30S particles and may also be responsible for determining the conformation of the 16S rRNA at the A site. The chain is Small ribosomal subunit protein uS14 from Rhodopseudomonas palustris (strain BisB18).